The chain runs to 433 residues: Trigger factor (433 aa).

Residues 161–246 form the PPIase FKBP-type domain; that stretch reads NDRVIIDFVG…LNKVENMILP (86 aa).

This sequence belongs to the FKBP-type PPIase family. Tig subfamily.

The protein resides in the cytoplasm. It carries out the reaction [protein]-peptidylproline (omega=180) = [protein]-peptidylproline (omega=0). In terms of biological role, involved in protein export. Acts as a chaperone by maintaining the newly synthesized protein in an open conformation. Functions as a peptidyl-prolyl cis-trans isomerase. The chain is Trigger factor from Haemophilus ducreyi (strain 35000HP / ATCC 700724).